Reading from the N-terminus, the 142-residue chain is uncharacterized protein (142 aa).

The span at M1 to S14 shows a compositional bias: basic residues. The interval M1–K40 is disordered. Low complexity predominate over residues K16–P28.

This is an uncharacterized protein from Aquifex aeolicus (strain VF5).